Here is a 499-residue protein sequence, read N- to C-terminus: Probable cytosol aminopeptidase (499 aa).

2 residues coordinate Mn(2+): K269 and D274. K281 is a catalytic residue. Mn(2+) contacts are provided by D292, D351, and E353. R355 is an active-site residue.

It belongs to the peptidase M17 family. Mn(2+) serves as cofactor.

The protein resides in the cytoplasm. The catalysed reaction is Release of an N-terminal amino acid, Xaa-|-Yaa-, in which Xaa is preferably Leu, but may be other amino acids including Pro although not Arg or Lys, and Yaa may be Pro. Amino acid amides and methyl esters are also readily hydrolyzed, but rates on arylamides are exceedingly low.. The enzyme catalyses Release of an N-terminal amino acid, preferentially leucine, but not glutamic or aspartic acids.. Its function is as follows. Presumably involved in the processing and regular turnover of intracellular proteins. Catalyzes the removal of unsubstituted N-terminal amino acids from various peptides. This Actinobacillus pleuropneumoniae serotype 5b (strain L20) protein is Probable cytosol aminopeptidase.